The chain runs to 276 residues: Putative pyruvate, phosphate dikinase regulatory protein 1 (276 aa).

157-164 (GVSRTSKT) is a binding site for ADP.

It belongs to the pyruvate, phosphate/water dikinase regulatory protein family. PDRP subfamily.

It catalyses the reaction N(tele)-phospho-L-histidyl/L-threonyl-[pyruvate, phosphate dikinase] + ADP = N(tele)-phospho-L-histidyl/O-phospho-L-threonyl-[pyruvate, phosphate dikinase] + AMP + H(+). It carries out the reaction N(tele)-phospho-L-histidyl/O-phospho-L-threonyl-[pyruvate, phosphate dikinase] + phosphate + H(+) = N(tele)-phospho-L-histidyl/L-threonyl-[pyruvate, phosphate dikinase] + diphosphate. In terms of biological role, bifunctional serine/threonine kinase and phosphorylase involved in the regulation of the pyruvate, phosphate dikinase (PPDK) by catalyzing its phosphorylation/dephosphorylation. The protein is Putative pyruvate, phosphate dikinase regulatory protein 1 of Staphylococcus haemolyticus (strain JCSC1435).